The following is a 270-amino-acid chain: A-type potassium channel modulatory protein KCNIP2 (270 aa).

The segment covering 1–17 (MRGQGRKESLSDSRDLD) has biased composition (basic and acidic residues). The interval 1–32 (MRGQGRKESLSDSRDLDGSYDQLTGHPPGPTK) is disordered. S9 carries the post-translational modification Phosphoserine. Residues C45 and C46 are each lipidated (S-palmitoyl cysteine). The EF-hand 1; degenerate domain maps to 81-137 (FELSTVCHRPEGLEQLQEQTKFTRKELQVLYRGFKNECPSGIVNEENFKQIYSQFFP). EF-hand domains are found at residues 140 to 175 (DSST…ILRG), 176 to 211 (TVDD…IYDM), and 224 to 259 (APRE…DENI). Residues D153, N155, D157, S159, D164, D189, N191, D193, C195, E200, D237, N239, D241, and E248 each coordinate Ca(2+). The interaction with KCND2 stretch occupies residues 257–270 (ENIMRSMQLFDNVI).

This sequence belongs to the recoverin family. In terms of assembly, component of heteromultimeric potassium channels. Identified in potassium channel complexes containing KCND1, KCND2, KCND3, KCNIP1, KCNIP2, KCNIP3, KCNIP4, DPP6 and DPP10. The KCND2-KCNIP2 channel complex contains four KCND2 and four KCNIP2 subunits. Interacts with KCND2. Probably part of a complex consisting of KCNIP1, KCNIP2 isoform 3 and KCND2. At least isoform 2 and isoform 3 can self-associate to form homodimers and homotetramers. Isoform 3 interacts with KCNIP1 in a calcium-dependent manner. Interacts with KCND3; each KCNIP2 monomer interacts with two adjacent KCND3 subunits, through both the N-terminal inactivation ball of a KCND3 subunit and a C-terminal helix from the adjacent KCND3 subunit, clamping them together; this interaction modulates the channel gating kinetics. In terms of processing, palmitoylated. Palmitoylation enhances association with the plasma membrane. As to expression, expressed in brain. Colocalizes with KCND2 in excitatory neurons including cortical and hippocampal CA1 pyramidal cells. Isoform 3 is expressed in heart and in umbilical vein endothelial cells. Not expressed in fetal heart.

The protein localises to the cell membrane. Its function is as follows. Regulatory subunit of Kv4/D (Shal)-type voltage-gated rapidly inactivating A-type potassium channels. Modulates channel density, inactivation kinetics and rate of recovery from inactivation in a calcium-dependent and isoform-specific manner. Involved in KCND2 and KCND3 trafficking to the cell surface. May be required for the expression of I(To) currents in the heart. The polypeptide is A-type potassium channel modulatory protein KCNIP2 (Homo sapiens (Human)).